The following is a 177-amino-acid chain: Secretion monitor (177 aa).

Residues 1 to 37 (MIGILNRWRQFGRRYFWPHLLLGMVAASLGVPSNLSG) form the signal peptide.

Belongs to the SecM family.

The protein localises to the cytoplasm. Its subcellular location is the cytosol. The protein resides in the periplasm. Its function is as follows. Regulates secA expression by translational coupling of the secM secA operon. Translational pausing at a specific Pro residue 5 residues before the end of the protein may allow disruption of a mRNA repressor helix that normally suppresses secA translation initiation. This Yersinia pseudotuberculosis serotype O:1b (strain IP 31758) protein is Secretion monitor.